The sequence spans 273 residues: Manganese catalase (273 aa).

Residue Glu35 participates in Mn(2+) binding. Ca(2+) contacts are provided by Asp57 and Asp61. Mn(2+)-binding residues include Glu66, His69, Glu149, and His182. Ca(2+)-binding residues include Asn220, Ser222, and Gly224. Residues 254-273 (EKPELKPAPPFVHNTLPGRE) are disordered.

Belongs to the manganese catalase family. The cofactor is Ca(2+). Mn(2+) is required as a cofactor.

It carries out the reaction 2 H2O2 = O2 + 2 H2O. Catalyzes the decomposition of hydrogen peroxide into water and oxygen. The sequence is that of Manganese catalase (ydbD) from Bacillus subtilis (strain 168).